A 68-amino-acid chain; its full sequence is Large ribosomal subunit protein bL31 (68 aa).

It belongs to the bacterial ribosomal protein bL31 family. Type A subfamily. In terms of assembly, part of the 50S ribosomal subunit.

Binds the 23S rRNA. The chain is Large ribosomal subunit protein bL31 from Helicobacter hepaticus (strain ATCC 51449 / 3B1).